The following is a 285-amino-acid chain: MAINFEQVNFSYGAGTTLAQPILHDINVTIPDGQVTAIIGQTGSGKSTFIQHLNGLLKPTTGRVVIDDFVLTSDLKEKNLTSLRARVGMVFQFPENQLFANTVLEDVMYAPINFGYAKADAEFAAKTALKQVNVSEELWDKSPFELSGGQMRRVAMAGTLASNPDIIVLDEPAAGLDPKGQKELLAIVRGLKEAGKLVVFISHQMDHVIAVADHVIVMHDGGVVAEGTPVEIFNKDLVWFKTVALDLPKAGQFAEQLRQKGHILRHRPLLLTELATMLNEEKRHE.

In terms of domain architecture, ABC transporter spans 3–245; that stretch reads INFEQVNFSY…DLVWFKTVAL (243 aa). 40 to 47 is a binding site for ATP; it reads GQTGSGKS. Residue Glu-171 is the Proton acceptor of the active site.

This sequence belongs to the ABC transporter superfamily. Energy-coupling factor EcfA family. Forms a stable energy-coupling factor (ECF) transporter complex probably composed of 2 membrane-embedded substrate-binding proteins (S component), 2 ATP-binding proteins (A component) and 2 transmembrane proteins (T component). This complex interacts with a number of substrate-specific components, including FolT, PanT and RibU for 5-formyltetrahydrofolate, pantothenate and riboflavin respectively.

It is found in the cell membrane. Functionally, ATP-binding (A) component of a common energy-coupling factor (ECF) ABC-transporter complex. Unlike classic ABC transporters this ECF transporter provides the energy necessary to transport a number of different substrates including 5-formyltetrahydrofolate, pantothenate and riboflavin. Expression of the complex plus FolT in E.coli allows 5-formyltetrahydrofolate uptake; 5-formyltetrahydrofolate is not taken up in the absence of FolT or the EcfA1A2T complex. The polypeptide is Energy-coupling factor transporter ATP-binding protein EcfA2 (Leuconostoc mesenteroides subsp. mesenteroides (strain ATCC 8293 / DSM 20343 / BCRC 11652 / CCM 1803 / JCM 6124 / NCDO 523 / NBRC 100496 / NCIMB 8023 / NCTC 12954 / NRRL B-1118 / 37Y)).